The sequence spans 185 residues: UPF0149 protein PFL_5969 (185 aa).

This sequence belongs to the UPF0149 family.

The polypeptide is UPF0149 protein PFL_5969 (Pseudomonas fluorescens (strain ATCC BAA-477 / NRRL B-23932 / Pf-5)).